A 561-amino-acid polypeptide reads, in one-letter code: MSSHGNSLFLRESGAGGGCLQGLQDSLQQRALRTRLRLQTMTREHVRRFLRRNAFILLTVSAVIIGVSLAFALRPYQLTYRQIKYFSFPGELLMRMLQMLVLPLIVSSRVTGMASLDNKATGRMGMRAAVYYMVTTVIAVFIGILMVTIIHPGKGSKEGLHREGRIETVPTADAFMDLVRNMFPPNLVEACFKQFKTQYSTRVVTRTIVRTDNGSELGASISPPSSAENETSILENVTRALGTLQEVISFEETVPVPGSANGINALGLVVFSVAFGLVIGGMKHKGRVLRDFFDSLNEAIMRLVGIIIWYAPVGILFLIAGKILEMEDMAVLGGQLGMYTLTVIVGLFLHAGGVLPLIYFLVTHRNPFPFIGGILQALITAMGTSSSSATLPITFRCLEEGLGVDRRITRFVLPVGATVNMDGTALYEALAAIFIAQVNNYELNLGQITTISITATAASVGAAGIPQAGLVTMVIVLTSVGLPTEDITLIIAVDWFLDRLRTMTNVLGDSIGAAVIEHLSQRELELQEAELTLPSLGKPYKSLMAQAKGASRGRGGNESVM.

Residues 1–52 (MSSHGNSLFLRESGAGGGCLQGLQDSLQQRALRTRLRLQTMTREHVRRFLRR) lie on the Cytoplasmic side of the membrane. Phosphoserine is present on serine 2. 3 consecutive transmembrane segments (helical) span residues 53 to 73 (NAFI…AFAL), 96 to 116 (MLQM…MASL), and 130 to 150 (VYYM…VTII). N-linked (GlcNAc...) asparagine glycans are attached at residues asparagine 213, asparagine 229, and asparagine 236. A run of 3 helical transmembrane segments spans residues 259–282 (SANG…IGGM), 292–319 (FFDS…LFLI), and 341–362 (LTVI…YFLV). An intramembrane region (discontinuously helical) is located at residues 368–398 (FPFIGGILQALITAMGTSSSSATLPITFRCL). Residue 385-387 (SSS) participates in L-aspartate binding. A helical transmembrane segment spans residues 408–434 (ITRFVLPVGATVNMDGTALYEALAAIF). Residues glycine 416, threonine 418, and asparagine 420 each contribute to the Na(+) site. Residues threonine 424, 465 to 469 (IPQAG), aspartate 498, and asparagine 505 contribute to the L-aspartate site. The segment at residues 448–481 (ITTISITATAASVGAAGIPQAGLVTMVIVLTSVG) is an intramembrane region (discontinuously helical). The chain crosses the membrane as a helical span at residues 495–516 (WFLDRLRTMTNVLGDSIGAAVI). Na(+) is bound by residues asparagine 505 and aspartate 509.

It belongs to the dicarboxylate/amino acid:cation symporter (DAACS) (TC 2.A.23) family. SLC1A6 subfamily. As to quaternary structure, homotrimer.

The protein localises to the cell membrane. It carries out the reaction K(+)(in) + L-glutamate(out) + 3 Na(+)(out) + H(+)(out) = K(+)(out) + L-glutamate(in) + 3 Na(+)(in) + H(+)(in). The enzyme catalyses K(+)(in) + L-aspartate(out) + 3 Na(+)(out) + H(+)(out) = K(+)(out) + L-aspartate(in) + 3 Na(+)(in) + H(+)(in). It catalyses the reaction D-aspartate(out) + K(+)(in) + 3 Na(+)(out) + H(+)(out) = D-aspartate(in) + K(+)(out) + 3 Na(+)(in) + H(+)(in). In terms of biological role, sodium-dependent, high-affinity amino acid transporter that mediates the uptake of L-glutamate and also L-aspartate and D-aspartate. Functions as a symporter that transports one amino acid molecule together with two or three Na(+) ions and one proton, in parallel with the counter-transport of one K(+) ion. Mediates Cl(-) flux that is not coupled to amino acid transport; this avoids the accumulation of negative charges due to aspartate and Na(+) symport. Plays a redundant role in the rapid removal of released glutamate from the synaptic cleft, which is essential for terminating the postsynaptic action of glutamate. The protein is Excitatory amino acid transporter 4 (Slc1a6) of Rattus norvegicus (Rat).